A 657-amino-acid polypeptide reads, in one-letter code: Probable cytochrome P450 556A1 (657 aa).

Residues 2–24 (FLTSILYTIIIILIFYKGLEYLI) form a helical membrane-spanning segment. The segment at 440–486 (RSLPSINNNNNNNNNNNNNNNNNNNNNNNNNSNNNSINGNNKNNNRN) is disordered. Over residues 446–486 (NNNNNNNNNNNNNNNNNNNNNNNNNSNNNSINGNNKNNNRN) the composition is skewed to low complexity. C587 is a heme binding site.

The protein belongs to the cytochrome P450 family. Requires heme as cofactor.

It localises to the membrane. This is Probable cytochrome P450 556A1 (cyp556A1) from Dictyostelium discoideum (Social amoeba).